The chain runs to 248 residues: Probable transcriptional regulatory protein P9303_05381 (248 aa).

This sequence belongs to the TACO1 family.

It is found in the cytoplasm. In Prochlorococcus marinus (strain MIT 9303), this protein is Probable transcriptional regulatory protein P9303_05381.